Here is a 492-residue protein sequence, read N- to C-terminus: Solute carrier family 2, facilitated glucose transporter member 1 (492 aa).

Methionine 1 carries the post-translational modification N-acetylmethionine. Residues 1 to 11 lie on the Cytoplasmic side of the membrane; sequence MEPSSKKVTGR. Residues 12 to 33 form a helical membrane-spanning segment; the sequence is LMLAVGGAVLGSLQFGYNTGVI. Over 34 to 66 the chain is Extracellular; it reads NAPQKVIEEFYNQTWIHRYGERILPTTLTTLWS. Asparagine 45 is a glycosylation site (N-linked (GlcNAc...) asparagine). A helical membrane pass occupies residues 67–87; that stretch reads LSVAIFSVGGMIGSFSVGLFV. Over 88–90 the chain is Cytoplasmic; the sequence is NRF. The helical transmembrane segment at 91–112 threads the bilayer; that stretch reads GRRNSMLMMNLLAFVSAVLMGF. The Extracellular segment spans residues 113–120; the sequence is SKLAKSFE. A helical membrane pass occupies residues 121–144; the sequence is MLILGRFIIGVYCGLTTGFVPMYV. Residues 145-155 lie on the Cytoplasmic side of the membrane; it reads GEVSPTALRGA. Residues 156-176 traverse the membrane as a helical segment; that stretch reads LGTLHQLGIVVGILIAQVFGL. Glutamine 161 contributes to the D-glucose binding site. At 177–185 the chain is on the extracellular side; sequence DSIMGNEDL. Residues 186 to 206 traverse the membrane as a helical segment; that stretch reads WPLLLSVIFVPALLQCIVLPL. The Cytoplasmic segment spans residues 207–271; that stretch reads CPESPRFLLI…LFRSPAYRQP (65 aa). Residue serine 226 is modified to Phosphoserine. Residues 272–293 traverse the membrane as a helical segment; sequence ILSAVVLQLSQQLSGINAVFYY. D-glucose contacts are provided by residues 282–283 and asparagine 288; that span reads QQ. Over 294–306 the chain is Extracellular; it reads STSIFEKAGVQQP. Residues 307-328 form a helical membrane-spanning segment; the sequence is VYATIGSGIVNTAFTVVSLFVV. Residue asparagine 317 coordinates D-glucose. Residues 329–334 are Cytoplasmic-facing; the sequence is ERAGRR. The helical transmembrane segment at 335 to 355 threads the bilayer; it reads TLHLIGLAGMAACAVLMTIAL. The Extracellular segment spans residues 356-365; the sequence is ALLEQLPWMS. The chain crosses the membrane as a helical span at residues 366-388; sequence YLSIVAIFGFVAFFEVGPGPIPW. Positions 380 and 388 each coordinate D-glucose. Residues 389–401 lie on the Cytoplasmic side of the membrane; that stretch reads FIVAELFSQGPRP. Residues 402–422 traverse the membrane as a helical segment; that stretch reads AAVAVAGFSNWTSNFIVGMCF. Over 423-429 the chain is Extracellular; it reads QYVEQLC. Residues 430–450 traverse the membrane as a helical segment; that stretch reads GPYVFIIFTVLLVLFFIFTYF. The Cytoplasmic segment spans residues 451 to 492; sequence KVPETKGRTFDEIASGFRQGGASQSDKTPEELFHPLGADSQV. Serine 465 carries the phosphoserine modification. Positions 468 to 492 are disordered; the sequence is RQGGASQSDKTPEELFHPLGADSQV. Threonine 478 carries the post-translational modification Phosphothreonine. A Phosphoserine modification is found at serine 490.

The protein belongs to the major facilitator superfamily. Sugar transporter (TC 2.A.1.1) family. Glucose transporter subfamily. As to quaternary structure, found in a complex with ADD2, DMTN and SLC2A1. Interacts (via C-terminus cytoplasmic region) with DMTN. Interacts with SNX27; the interaction is required when endocytosed to prevent degradation in lysosomes and promote recycling to the plasma membrane. Interacts with GIPC (via PDZ domain). Interacts with STOM. Interacts with SGTA (via Gln-rich region). Interacts with BSG. Interacts with SMIM43; the interaction may promote SLC2A1-mediated glucose transport to meet the energy needs of mesendoderm differentiation. In terms of processing, phosphorylation at Ser-226 by PKC promotes glucose uptake by increasing cell membrane localization.

It is found in the cell membrane. The protein resides in the photoreceptor inner segment. It catalyses the reaction D-glucose(out) = D-glucose(in). The uptake of glucose is inhibited by cytochalasin B. Glucose uptake is increased in response to phorbol ester 12-O-tetradecanoylphorbol-13-acetate (TPA) treatment: TPA-induced glucose uptake requires phosphorylation at Ser-226. In terms of biological role, facilitative glucose transporter, which is responsible for constitutive or basal glucose uptake. Has a very broad substrate specificity; can transport a wide range of aldoses including both pentoses and hexoses. Most important energy carrier of the brain: present at the blood-brain barrier and assures the energy-independent, facilitative transport of glucose into the brain. In association with BSG and NXNL1, promotes retinal cone survival by increasing glucose uptake into photoreceptors. Required for mesendoderm differentiation. This chain is Solute carrier family 2, facilitated glucose transporter member 1, found in Oryctolagus cuniculus (Rabbit).